The sequence spans 339 residues: Putative clathrin assembly protein At1g14686 (339 aa).

The region spanning Ser16 to Arg148 is the ENTH domain. Positions Glu283 to Thr307 are disordered. Residues Ala295 to Ile305 show a composition bias toward acidic residues.

It localises to the membrane. The protein resides in the clathrin-coated pit. It is found in the golgi apparatus. The protein localises to the cytoplasmic vesicle. Its subcellular location is the clathrin-coated vesicle. This Arabidopsis thaliana (Mouse-ear cress) protein is Putative clathrin assembly protein At1g14686.